We begin with the raw amino-acid sequence, 1096 residues long: Carbamoyl phosphate synthase large chain (1096 aa).

Positions 1-402 are carboxyphosphate synthetic domain; sequence MPKRDDINSV…ALQKALRSLE (402 aa). ATP is bound by residues Arg-129, Arg-169, Gly-175, Gly-176, Glu-208, Ile-210, Glu-215, Gly-241, Val-242, His-243, Gln-285, and Glu-299. The 196-residue stretch at 133-328 folds into the ATP-grasp 1 domain; it reads KDLVIESGAD…IAKIAAKLAI (196 aa). The Mg(2+) site is built by Gln-285, Glu-299, and Asn-301. The Mn(2+) site is built by Gln-285, Glu-299, and Asn-301. The tract at residues 403-547 is oligomerization domain; the sequence is KRGSSFHWGP…YSSYDSETEI (145 aa). Residues 548-950 are carbamoyl phosphate synthetic domain; it reads VPSDRRKVII…AFAKSQEAAF (403 aa). One can recognise an ATP-grasp 2 domain in the interval 676–870; the sequence is SGILDTAGLV…LAKAASLVMV (195 aa). Arg-712, Arg-754, Leu-756, Glu-761, Gly-786, Ile-787, His-788, Ser-789, Gln-829, and Glu-841 together coordinate ATP. Positions 829, 841, and 843 each coordinate Mg(2+). 3 residues coordinate Mn(2+): Gln-829, Glu-841, and Asn-843. Residues 951–1095 enclose the MGS-like domain; the sequence is GGLPLSGTVF…QDYAIAREAR (145 aa). The segment at 951 to 1096 is allosteric domain; that stretch reads GGLPLSGTVF…DYAIAREARR (146 aa).

This sequence belongs to the CarB family. In terms of assembly, composed of two chains; the small (or glutamine) chain promotes the hydrolysis of glutamine to ammonia, which is used by the large (or ammonia) chain to synthesize carbamoyl phosphate. Tetramer of heterodimers (alpha,beta)4. It depends on Mg(2+) as a cofactor. Mn(2+) serves as cofactor.

It carries out the reaction hydrogencarbonate + L-glutamine + 2 ATP + H2O = carbamoyl phosphate + L-glutamate + 2 ADP + phosphate + 2 H(+). The catalysed reaction is hydrogencarbonate + NH4(+) + 2 ATP = carbamoyl phosphate + 2 ADP + phosphate + 2 H(+). It functions in the pathway amino-acid biosynthesis; L-arginine biosynthesis; carbamoyl phosphate from bicarbonate: step 1/1. Its pathway is pyrimidine metabolism; UMP biosynthesis via de novo pathway; (S)-dihydroorotate from bicarbonate: step 1/3. Functionally, large subunit of the glutamine-dependent carbamoyl phosphate synthetase (CPSase). CPSase catalyzes the formation of carbamoyl phosphate from the ammonia moiety of glutamine, carbonate, and phosphate donated by ATP, constituting the first step of 2 biosynthetic pathways, one leading to arginine and/or urea and the other to pyrimidine nucleotides. The large subunit (synthetase) binds the substrates ammonia (free or transferred from glutamine from the small subunit), hydrogencarbonate and ATP and carries out an ATP-coupled ligase reaction, activating hydrogencarbonate by forming carboxy phosphate which reacts with ammonia to form carbamoyl phosphate. This Clavibacter michiganensis subsp. michiganensis (strain NCPPB 382) protein is Carbamoyl phosphate synthase large chain.